The sequence spans 861 residues: MNNPSTTKAPLADYLAHLPLAEEERERLGESASFSELHARLAGAEGAAADAGGDPALASVRARLQLGTPELDDAEMFGVDAQGRTFLKISPPIRRTKVIPEPWRTNILVRGWRRLTGRSNPPKPKRALPRARWQRVGSLRRFILLLLMLAQTSVATYYMKGILPYQGWAFVDLEELAQQSLLDTVQQVLPYVIQFGILALFAILFCWVSAGFWTALMGFWELLTGRDRYRISGSSAGSEPIAADARTAIVMPICNEDVPRVFAGLRATVESMAATGEMERFDFFVLSDTNDPDIAVAEQQAWLELCRETKGFGKIFYRRRRRRVKRKSGNIDDFCRRWGGDYRYMVVMDADSVMSGDCLAKLVRLMEANPEAGIIQTAPKASGMDTLYARMQQFATRVYGPLFTAGLHFWQLGESHYWGHNAIIRMQPFIDHCALAPLPGKGSFAGAILSHDFVEAALMRRAGWGVWIAYDLDGSYEELPPNLLDELKRDRRWCHGNLMNFRLFLVKGMHPVHRAVFLTGVMSYLSAPLWFFFLVLSTALLAVHQLMEPQYFLEPRQLFPIWPQWHPEKAIALFSTTLTLLFLPKLLSVMLIWAKGAKGFGGVIRVTLSMLLEMFFSVLLAPVRMLFHTRFVLAAFLGWSVQWNSPQRDDDATPWSEAIRRHGMQTLLGIAWTLLVAWLNPRFLWWLSPIVGSLILSIPVSVISSRVKLGLRARDEKLFLIPEEYDTPRELRATDEYTYENRWHALKDGFLKAAVDPLLNALACAMGTARHNRAQAIETVRGERIGKAIEKGPEQLDGATRLALLSDPVALSRLHTRVWEEDRDDWLGRWRKAEADDPHAASVPLAQVVPGDAGLLPAAQS.

6 helical membrane passes run 142-162, 188-208, 516-536, 573-593, 600-620, and 683-703; these read FILLLLMLAQTSVATYYMKGI, VLPYVIQFGILALFAILFCWV, VFLTGVMSYLSAPLWFFFLVL, LFSTTLTLLFLPKLLSVMLIW, FGGVIRVTLSMLLEMFFSVLL, and FLWWLSPIVGSLILSIPVSVI.

The protein belongs to the glycosyltransferase 2 family. OpgH subfamily.

The protein localises to the cell inner membrane. It participates in glycan metabolism; osmoregulated periplasmic glucan (OPG) biosynthesis. Its function is as follows. Involved in the biosynthesis of osmoregulated periplasmic glucans (OPGs). In Pseudomonas aeruginosa (strain UCBPP-PA14), this protein is Glucans biosynthesis glucosyltransferase H.